A 99-amino-acid polypeptide reads, in one-letter code: Endothelin receptor type B (99 aa).

Topologically, residues 1–8 are extracellular; that stretch reads PFGAEMCK. Cysteine 7 and cysteine 88 are oxidised to a cystine. Residues 9–30 traverse the membrane as a helical segment; sequence LVPFIQKASVGITVLSLCALSI. Residues 31–51 lie on the Cytoplasmic side of the membrane; it reads DRYRAVASWSRIKGIGIPKWT. The chain crosses the membrane as a helical span at residues 52 to 76; that stretch reads AVEIVLIWVVSVVLAVPEAIGFDMI. At 77 to 99 the chain is on the extracellular side; that stretch reads TMDYKGSYLRICLLHPVQKTAFM.

Belongs to the G-protein coupled receptor 1 family. Endothelin receptor subfamily. EDNRB sub-subfamily.

It localises to the cell membrane. Its function is as follows. Non-specific receptor for endothelin 1, 2, and 3. Mediates its action by association with G proteins that activate a phosphatidylinositol-calcium second messenger system. This is Endothelin receptor type B (EDNRB) from Macaca fascicularis (Crab-eating macaque).